The following is a 1357-amino-acid chain: DNA-directed RNA polymerase subunit beta (1357 aa).

It belongs to the RNA polymerase beta chain family. The RNAP catalytic core consists of 2 alpha, 1 beta, 1 beta' and 1 omega subunit. When a sigma factor is associated with the core the holoenzyme is formed, which can initiate transcription.

The catalysed reaction is RNA(n) + a ribonucleoside 5'-triphosphate = RNA(n+1) + diphosphate. Its function is as follows. DNA-dependent RNA polymerase catalyzes the transcription of DNA into RNA using the four ribonucleoside triphosphates as substrates. This is DNA-directed RNA polymerase subunit beta from Hahella chejuensis (strain KCTC 2396).